Here is a 245-residue protein sequence, read N- to C-terminus: 2,3-bisphosphoglycerate-dependent phosphoglycerate mutase (245 aa).

Residues 8-15, 21-22, Arg60, 87-90, Lys98, 114-115, and 183-184 each bind substrate; these read RHGQSLWN, TG, ERHY, RR, and GN. The active-site Tele-phosphohistidine intermediate is the His9. The active-site Proton donor/acceptor is the Glu87.

Belongs to the phosphoglycerate mutase family. BPG-dependent PGAM subfamily.

It carries out the reaction (2R)-2-phosphoglycerate = (2R)-3-phosphoglycerate. It functions in the pathway carbohydrate degradation; glycolysis; pyruvate from D-glyceraldehyde 3-phosphate: step 3/5. Functionally, catalyzes the interconversion of 2-phosphoglycerate and 3-phosphoglycerate. This Bacillus thuringiensis subsp. konkukian (strain 97-27) protein is 2,3-bisphosphoglycerate-dependent phosphoglycerate mutase.